The following is a 95-amino-acid chain: MLHTLMKSPFETNVSLVISMLKKSDDFLALQDGVLIALKDNIFLKSIIMSPVKLYLIKEDVYARGIRKNISREFILINYIHFVSLTLKHKKQMTW.

The protein belongs to the DsrH/TusB family. Heterohexamer, formed by a dimer of trimers. The hexameric TusBCD complex contains 2 copies each of TusB, TusC and TusD. The TusBCD complex interacts with TusE.

The protein resides in the cytoplasm. Part of a sulfur-relay system required for 2-thiolation of 5-methylaminomethyl-2-thiouridine (mnm(5)s(2)U) at tRNA wobble positions. The chain is Protein TusB from Buchnera aphidicola subsp. Acyrthosiphon pisum (strain 5A).